The primary structure comprises 95 residues: Histone-like DNA-binding protein (95 aa).

This sequence belongs to the bacterial histone-like protein family.

In Rickettsia felis (strain ATCC VR-1525 / URRWXCal2) (Rickettsia azadi), this protein is Histone-like DNA-binding protein.